The following is a 106-amino-acid chain: UPF0145 protein Pput_2816 (106 aa).

Belongs to the UPF0145 family.

The polypeptide is UPF0145 protein Pput_2816 (Pseudomonas putida (strain ATCC 700007 / DSM 6899 / JCM 31910 / BCRC 17059 / LMG 24140 / F1)).